Here is a 977-residue protein sequence, read N- to C-terminus: Macrophage colony-stimulating factor 1 receptor (977 aa).

Residues 1-19 (MELGPPLVLLLATVWHGQG) form the signal peptide. Residues 20 to 515 (APVIEPSGPE…QLPDESLFTP (496 aa)) are Extracellular-facing. Ig-like C2-type domains follow at residues 24–104 (EPSG…VKDP), 107–197 (SWNL…KVNR), 204–298 (QIKL…VVES), 299–397 (AYLN…LTLR), and 398–503 (YPPE…SLGQ). Disulfide bonds link Cys-42–Cys-84, Cys-127–Cys-177, and Cys-224–Cys-278. Asn-45 and Asn-73 each carry an N-linked (GlcNAc...) asparagine glycan. N-linked (GlcNAc...) asparagine glycans are attached at residues Asn-302, Asn-335, Asn-389, Asn-410, Asn-449, Asn-478, and Asn-491. Cysteines 417 and 483 form a disulfide. Residues 516–536 (VVVACMSVMSLLVLLLLLLLY) form a helical membrane-spanning segment. Residues 537 to 977 (KYKQKPKYQV…LLQPNNYQFC (441 aa)) are Cytoplasmic-facing. Positions 540–572 (QKPKYQVRWKIIERYEGNSYTFIDPTQLPYNEK) are regulatory juxtamembrane domain. Tyr-544 and Tyr-559 each carry phosphotyrosine; by autocatalysis. Residues 580–913 (LQFGKTLGAG…ICFLLQEQAR (334 aa)) form the Protein kinase domain. ATP is bound by residues 586-594 (LGAGAFGKV) and Lys-614. 2 positions are modified to phosphotyrosine; by autocatalysis: Tyr-697 and Tyr-706. Position 711 is a phosphoserine (Ser-711). Position 721 is a phosphotyrosine; by autocatalysis (Tyr-721). Catalysis depends on Asp-776, which acts as the Proton acceptor. Positions 794–816 (DFGLARDIMNDSNYVVKGNARLP) are activation loop. A phosphotyrosine; by autocatalysis mark is found at Tyr-807 and Tyr-921. The interval 921–957 (YANLPSSGGSSGSDSGGGSSGGSSSEPEEESSSEHLA) is disordered. Positions 929–941 (GSSGSDSGGGSSG) are enriched in gly residues. At Tyr-974 the chain carries Phosphotyrosine; by autocatalysis.

It belongs to the protein kinase superfamily. Tyr protein kinase family. CSF-1/PDGF receptor subfamily. Monomer. Homodimer. Interacts with CSF1 and IL34. Interaction with dimeric CSF1 or IL34 leads to receptor homodimerization. Interacts with INPPL1/SHIP2 and THOC5. Interacts (tyrosine phosphorylated) with PLCG2 (via SH2 domain). Interacts (tyrosine phosphorylated) with PIK3R1 (via SH2 domain). Interacts (tyrosine phosphorylated) with FYN, YES1 and SRC (via SH2 domain). Interacts (tyrosine phosphorylated) with CBL, GRB2 and SLA2. In terms of processing, autophosphorylated in response to CSF1 or IL34 binding. Phosphorylation at Tyr-559 is important for normal down-regulation of signaling by ubiquitination, internalization and degradation. Phosphorylation at Tyr-559 and Tyr-807 is important for interaction with SRC family members, including FYN, YES1 and SRC, and for subsequent activation of these protein kinases. Phosphorylation at Tyr-697 and Tyr-921 is important for interaction with GRB2. Phosphorylation at Tyr-721 is important for interaction with PIK3R1. Phosphorylation at Tyr-721 and Tyr-807 is important for interaction with PLCG2. Phosphorylation at Tyr-974 is important for interaction with CBL. Dephosphorylation by PTPN2 negatively regulates downstream signaling and macrophage differentiation. Ubiquitinated. Becomes rapidly polyubiquitinated after autophosphorylation, leading to its degradation. As to expression, widely expressed.

The protein localises to the cell membrane. The catalysed reaction is L-tyrosyl-[protein] + ATP = O-phospho-L-tyrosyl-[protein] + ADP + H(+). With respect to regulation, present in an inactive conformation in the absence of bound ligand. CSF1 or IL34 binding leads to dimerization and activation by autophosphorylation on tyrosine residues. Inhibited by imatinib/STI-571 (Gleevec), dasatinib, sunitinib/SU11248, lestaurtinib/CEP-701, midostaurin/PKC-412, Ki20227, linifanib/ABT-869, Axitinib/AG013736, sorafenib/BAY 43-9006 and GW2580. In terms of biological role, tyrosine-protein kinase that acts as a cell-surface receptor for CSF1 and IL34 and plays an essential role in the regulation of survival, proliferation and differentiation of hematopoietic precursor cells, especially mononuclear phagocytes, such as macrophages and monocytes. Promotes the release of pro-inflammatory chemokines in response to IL34 and CSF1, and thereby plays an important role in innate immunity and in inflammatory processes. Plays an important role in the regulation of osteoclast proliferation and differentiation, the regulation of bone resorption, and is required for normal bone and tooth development. Required for normal male and female fertility, and for normal development of milk ducts and acinar structures in the mammary gland during pregnancy. Promotes reorganization of the actin cytoskeleton, regulates formation of membrane ruffles, cell adhesion and cell migration, and promotes cancer cell invasion. Activates several signaling pathways in response to ligand binding, including the ERK1/2 and the JNK pathway. Phosphorylates PIK3R1, PLCG2, GRB2, SLA2 and CBL. Activation of PLCG2 leads to the production of the cellular signaling molecules diacylglycerol and inositol 1,4,5-trisphosphate, that then lead to the activation of protein kinase C family members, especially PRKCD. Phosphorylation of PIK3R1, the regulatory subunit of phosphatidylinositol 3-kinase, leads to activation of the AKT1 signaling pathway. Activated CSF1R also mediates activation of the MAP kinases MAPK1/ERK2 and/or MAPK3/ERK1, and of the SRC family kinases SRC, FYN and YES1. Activated CSF1R transmits signals both via proteins that directly interact with phosphorylated tyrosine residues in its intracellular domain, or via adapter proteins, such as GRB2. Promotes activation of STAT family members STAT3, STAT5A and/or STAT5B. Promotes tyrosine phosphorylation of SHC1 and INPP5D/SHIP-1. Receptor signaling is down-regulated by protein phosphatases, such as INPP5D/SHIP-1, that dephosphorylate the receptor and its downstream effectors, and by rapid internalization of the activated receptor. In the central nervous system, may play a role in the development of microglia macrophages. This Mus musculus (Mouse) protein is Macrophage colony-stimulating factor 1 receptor (Csf1r).